A 421-amino-acid chain; its full sequence is Divalent metal cation transporter MntH (421 aa).

Helical transmembrane passes span 27–47, 51–71, 100–120, 128–148, 160–180, 201–221, 248–268, 289–309, 337–357, 358–378, and 396–416; these read LGPA…ATNI, SLFD…AIFL, WFLW…EFLG, LFHI…FAIV, GIIF…LFIA, AMLI…IYLH, ILVA…VSAA, PLLG…SGFS, LVTM…LKSL, IVSQ…LLLI, and IMGV…LYLT.

The protein belongs to the NRAMP family.

It is found in the cell membrane. H(+)-stimulated, divalent metal cation uptake system. This chain is Divalent metal cation transporter MntH, found in Caldanaerobacter subterraneus subsp. tengcongensis (strain DSM 15242 / JCM 11007 / NBRC 100824 / MB4) (Thermoanaerobacter tengcongensis).